The sequence spans 145 residues: Basic phospholipase A2 textilotoxin A chain (145 aa).

Residues 1 to 19 form the signal peptide; it reads MHPAHLLVLLGVCVSLLGA. The propeptide occupies 20-27; it reads SDIPPLPL. 7 disulfides stabilise this stretch: Cys38–Cys98, Cys54–Cys144, Cys56–Cys72, Cys71–Cys125, Cys78–Cys118, Cys87–Cys111, and Cys105–Cys116. Ca(2+)-binding residues include Tyr55, Gly57, and Gly59. The active site involves His75. A Ca(2+)-binding site is contributed by Asp76. Residue Asp119 is part of the active site.

This sequence belongs to the phospholipase A2 family. Group I subfamily. D49 sub-subfamily. As to quaternary structure, heterohexamer. 2 forms exist: 2 A or 2 B chains, 2 C chains and 2 covalently-linked D chains, and 1 A or 1 B, 1 C, 2 covalently-linked D chains and 2 differentially glycosylated covalently-linked D chains. Textilotoxin was originally described as pentameric. Requires Ca(2+) as cofactor. In terms of tissue distribution, expressed by the venom gland.

The protein localises to the secreted. The enzyme catalyses a 1,2-diacyl-sn-glycero-3-phosphocholine + H2O = a 1-acyl-sn-glycero-3-phosphocholine + a fatty acid + H(+). Its function is as follows. Snake venom oligomeric phospholipase A2 that has potent presynaptic neurotoxicity. Chain A possesses a very low toxicity, but is essential for neurotoxicity. Possesses a low enzymatic activity. PLA2 catalyzes the calcium-dependent hydrolysis of the 2-acyl groups in 3-sn-phosphoglycerides. The protein is Basic phospholipase A2 textilotoxin A chain of Pseudonaja textilis (Eastern brown snake).